A 688-amino-acid polypeptide reads, in one-letter code: Complement C1s subcomponent (688 aa).

The N-terminal stretch at M1–A15 is a signal peptide. In terms of domain architecture, CUB 1 spans E16 to T130. Ca(2+) is bound by residues E60, D68, D113, D131, I132, and E134. A disulfide bridge links C65 with C83. In terms of domain architecture, EGF-like; calcium-binding spans D131–G172. Disulfide bonds link C135/C147, C143/C156, and C158/C171. Ca(2+) is bound by residues N149, F150, and G153. A (3R)-3-hydroxyasparagine modification is found at N149. N174 carries N-linked (GlcNAc...) asparagine glycosylation. C175 and C202 are oxidised to a cystine. A CUB 2 domain is found at C175–D290. Ca(2+)-binding residues include E226, D236, D275, G278, and Q279. The cysteines at positions 234 and 251 are disulfide-linked. Sushi domains lie at M292–P356 and V357–P423. Cystine bridges form between C294–C341, C321–C354, C359–C403, C386–C421, C425–C549, C595–C618, and C628–C659. N406 carries N-linked (GlcNAc...) asparagine glycosylation. The 243-residue stretch at I438–Q680 folds into the Peptidase S1 domain. Catalysis depends on charge relay system residues H475 and D529. S632 functions as the Charge relay system in the catalytic mechanism.

The protein belongs to the peptidase S1 family. In terms of assembly, core component of the complement C1 complex, a calcium-dependent complex composed of 1 molecule of the C1Q subcomplex, 2 molecules of C1R and 2 molecules of C1S. The C1Q subcomplex is composed 18 subunits: 3 chains of C1QA, C1QB, and C1QC trimerize to form 6 collagen-like triple helices connected to six globular ligand-recognition modules. Cleaved and activated by C1R to generate Complement C1s subcomponent heavy and light chains. Post-translationally, the iron and 2-oxoglutarate dependent 3-hydroxylation of aspartate and asparagine is (R) stereospecific within EGF domains.

Its subcellular location is the secreted. The protein resides in the cell surface. The enzyme catalyses Cleavage of Arg-|-Ala bond in complement component C4 to form C4a and C4b, and Lys(or Arg)-|-Lys bond in complement component C2 to form C2a and C2b: the 'classical' pathway C3 convertase.. Cleaved and activated by C1R. Immunoglobulin-binding promotes autoactivation of C1R, which results in the cleavage of the Arg-Ile bond in the catalytic domain. Inhibited by C1 inhibitor (SERPING1). Functionally, component of the complement C1 complex, a multiprotein complex that initiates the classical pathway of the complement system, a cascade of proteins that leads to phagocytosis and breakdown of pathogens and signaling that strengthens the adaptive immune system. C1S is activated following association of the C1 complex with immunoglobulins (IgG or IgM) complexed with antigens to form antigen-antibody complexes on the surface of pathogens. C1S is cleaved and activated by C1R to generate C1s subcomponent heavy and light chains. C1s subcomponent light chain then cleaves and activates C2 and C4, the next components of the classical complement pathway. In terms of biological role, serine protease component of the complement C1 complex, which catalyzes cleavage and activation of C2 and C4, the next components of the classical complement pathway. Also able to cleave C1 inhibitor (SERPING1) in vitro; additional evidence is however required to confirm this result in vivo. Also cleaves IGFBP5 and thereby inhibits the trophic effects of IGF1. The sequence is that of Complement C1s subcomponent from Homo sapiens (Human).